A 529-amino-acid polypeptide reads, in one-letter code: Ribonuclease Y (529 aa).

The chain crosses the membrane as a helical span at residues 4-24 (GLIYISLEVLVACLITALIMY). Positions 216–297 (LTSRIALPCS…NRIEEVYHRV (82 aa)) constitute a KH domain. An HD domain is found at 342–435 (ALQHSKEVAL…VCAADALSAG (94 aa)).

It belongs to the RNase Y family.

The protein resides in the cell membrane. Its function is as follows. Endoribonuclease that initiates mRNA decay. In Helicobacter pylori (strain J99 / ATCC 700824) (Campylobacter pylori J99), this protein is Ribonuclease Y.